The sequence spans 710 residues: Polyribonucleotide nucleotidyltransferase (710 aa).

Residues D486 and D492 each coordinate Mg(2+). The 60-residue stretch at 553-612 (PRFETIKIHPDKIRDIIGKGGATIRSITEETNSSIDIDDDGTVKVYADDNEALQAALNRI) folds into the KH domain. The 69-residue stretch at 622 to 690 (GAIYEGTVVR…QRGRIKLSIK (69 aa)) folds into the S1 motif domain.

It belongs to the polyribonucleotide nucleotidyltransferase family. In terms of assembly, component of the RNA degradosome, which is a multiprotein complex involved in RNA processing and mRNA degradation. The cofactor is Mg(2+).

Its subcellular location is the cytoplasm. The catalysed reaction is RNA(n+1) + phosphate = RNA(n) + a ribonucleoside 5'-diphosphate. In terms of biological role, involved in mRNA degradation. Catalyzes the phosphorolysis of single-stranded polyribonucleotides processively in the 3'- to 5'-direction. The polypeptide is Polyribonucleotide nucleotidyltransferase (Cellvibrio japonicus (strain Ueda107) (Pseudomonas fluorescens subsp. cellulosa)).